The chain runs to 108 residues: Thiosulfate sulfurtransferase GlpE (108 aa).

The region spanning 17 to 105 (HQGTAVLVDI…WHRHFPSEVA (89 aa)) is the Rhodanese domain. C65 acts as the Cysteine persulfide intermediate in catalysis.

Belongs to the GlpE family.

Its subcellular location is the cytoplasm. The enzyme catalyses thiosulfate + hydrogen cyanide = thiocyanate + sulfite + 2 H(+). It carries out the reaction thiosulfate + [thioredoxin]-dithiol = [thioredoxin]-disulfide + hydrogen sulfide + sulfite + 2 H(+). Its function is as follows. Transferase that catalyzes the transfer of sulfur from thiosulfate to thiophilic acceptors such as cyanide or dithiols. May function in a CysM-independent thiosulfate assimilation pathway by catalyzing the conversion of thiosulfate to sulfite, which can then be used for L-cysteine biosynthesis. This Citrobacter koseri (strain ATCC BAA-895 / CDC 4225-83 / SGSC4696) protein is Thiosulfate sulfurtransferase GlpE.